The following is a 256-amino-acid chain: Thiazole synthase (256 aa).

The Schiff-base intermediate with DXP role is filled by lysine 96. 1-deoxy-D-xylulose 5-phosphate contacts are provided by residues glycine 157, 183-184, and 205-206; these read AG and NT.

This sequence belongs to the ThiG family. In terms of assembly, homotetramer. Forms heterodimers with either ThiH or ThiS.

Its subcellular location is the cytoplasm. The catalysed reaction is [ThiS sulfur-carrier protein]-C-terminal-Gly-aminoethanethioate + 2-iminoacetate + 1-deoxy-D-xylulose 5-phosphate = [ThiS sulfur-carrier protein]-C-terminal Gly-Gly + 2-[(2R,5Z)-2-carboxy-4-methylthiazol-5(2H)-ylidene]ethyl phosphate + 2 H2O + H(+). It functions in the pathway cofactor biosynthesis; thiamine diphosphate biosynthesis. In terms of biological role, catalyzes the rearrangement of 1-deoxy-D-xylulose 5-phosphate (DXP) to produce the thiazole phosphate moiety of thiamine. Sulfur is provided by the thiocarboxylate moiety of the carrier protein ThiS. In vitro, sulfur can be provided by H(2)S. This chain is Thiazole synthase, found in Bacillus mycoides (strain KBAB4) (Bacillus weihenstephanensis).